Here is a 161-residue protein sequence, read N- to C-terminus: Leucine-rich colipase-like protein 1 (161 aa).

A signal peptide spans 1–25; that stretch reads MSVSVWPPLLLLLLLLLLWAVPTFQ.

This chain is Leucine-rich colipase-like protein 1 (Lrcol1), found in Mus musculus (Mouse).